Consider the following 1125-residue polypeptide: MDSLAGLVLCGVSLLLSATVDGAMDLILINSLPLVSDAETSLTCIASGWRPHEPITIGRDFEALMNQHQDPLEVTQDATREWAKKVVWKREKASKINGAYFCEGRVRGQAIRIRTMKMRQQASFLPATLTMTVDRGDNVNISFKKVLIKEEDAVIYKNGSFIHSVPRHEVPDILEVQVPHAQPQDAGVYSARYIGGNLFTSAFTRLIVRRCEAQKWGPECNRICTACMNNGICHEDTGECICPPGFMGRTCEKACEPHTFGRTCKERCSEPEGCKSFVFCLPDPYGCSCATGWKGLQCNEACQPGYYGPDCKLRCSCTNGEKCDRFQGCLCSPGRQGLQCEKEGVPRMTPKIEDLPDHIEVNSGKFNPICKASGWPRPANEEMTLVKPDGTVLRPKDFNHTGHLSVATFTINRILPPDSGVWVCSVNTVSGMVEKPFNISVKVLPKPLNAPKVIDTGHNFAVINISSEPYFGDGPIKSKKLLYKPVNHYEAWRHIQVTNEIVTLNYLEPRTEYELCVQLVRRGEGGEGHPGPVRRFTTASIGLPPPRGLSLLPKSQTTLNLTWQPIFPSSEDDFYVEVERRSVQMNSDQQNIKVPGNLTSVLLNNLHPREQYIVRARVNTKAQGEWSEDLIAWTLSDIVPPQPENIKIFNITDSSAVISWTILDGYSISAIIIRYKVQGKNEDQHIDVKIKNATITQYQLKGLEPQTVYQVDIFAENNIGSSNPTSSHELTTLSESQAPADLGGRKMLLIAILGSAGMTCLTVLLAFLIMLQLKRANVQRRMAQAFQNVREEPAVQFNSGTLALNRKAKNNPDPTIYPVLDWNDIKFQDVIGEGNFGQVLKARIKKDGLRMDAAIKRMKEYASKDDHRDFAGELEVLCKLGHHPNIINLLGACEHRGYLYLAIEYAPHGNLLDFLRKSRVLETDPAFAIANSTASTLSSQQLLHFAADVARGMDYLSQKQFIHRDLAARNILVGENYVAKIADFGLSRGQEVYVKKTMGRLPVRWMAIESLNYSVYTTNSDVWSYGVLLWEIVSLGGTPYCGMTCAELYEKLPQGYRLEKPLNCDDEVYDLMRQCWREKPYERPSFAQILVSLNRMLEERKTYVNTTLYEKFTYAGIDCSAEEAA.

The signal sequence occupies residues 1 to 22 (MDSLAGLVLCGVSLLLSATVDG). Topologically, residues 23 to 748 (AMDLILINSL…PADLGGRKML (726 aa)) are extracellular. Cys-44 and Cys-102 are disulfide-bonded. Positions 44–123 (CIASGWRPHE…RTMKMRQQAS (80 aa)) constitute an Ig-like C2-type 1 domain. N-linked (GlcNAc...) asparagine glycosylation is present at Asn-158. EGF-like domains follow at residues 210–252 (RCEA…RTCE), 254–299 (ACEP…LQCN), and 301–341 (ACQP…LQCE). 13 disulfides stabilise this stretch: Cys-211/Cys-220, Cys-224/Cys-233, Cys-227/Cys-240, Cys-242/Cys-251, Cys-255/Cys-264, Cys-268/Cys-274, Cys-280/Cys-287, Cys-289/Cys-298, Cys-302/Cys-311, Cys-315/Cys-323, Cys-317/Cys-329, Cys-331/Cys-340, and Cys-370/Cys-424. The Ig-like C2-type 2 domain occupies 350 to 440 (PKIEDLPDHI…GMVEKPFNIS (91 aa)). 3 Fibronectin type-III domains span residues 447 to 541 (PLNA…TASI), 545 to 637 (PPRG…TLSD), and 642 to 735 (QPEN…TLSE). Residues 749–769 (LIAILGSAGMTCLTVLLAFLI) form a helical membrane-spanning segment. Residues 770–1125 (MLQLKRANVQ…GIDCSAEEAA (356 aa)) lie on the Cytoplasmic side of the membrane. Residues 825–1097 (IKFQDVIGEG…QILVSLNRML (273 aa)) form the Protein kinase domain. ATP is bound by residues 831–839 (IGEGNFGQV) and Lys-856. Tyr-861 bears the Phosphotyrosine; by autocatalysis mark. Asp-965 acts as the Proton acceptor in catalysis. 3 positions are modified to phosphotyrosine; by autocatalysis: Tyr-993, Tyr-1103, and Tyr-1109.

Belongs to the protein kinase superfamily. Tyr protein kinase family. Tie subfamily. Homodimer. Heterodimer with TIE1. Interacts with ANGPT1, ANGPT2 and ANGPT4. At cell-cell contacts in quiescent cells, forms a signaling complex composed of ANGPT1 plus TEK molecules from two adjoining cells. In the absence of endothelial cell-cell contacts, interaction with ANGPT1 mediates contacts with the extracellular matrix. Interacts (tyrosine phosphorylated) with TNIP2. Interacts (tyrosine phosphorylated) with SHC1 (via SH2 domain). Interacts with PTPRB; this promotes endothelial cell-cell adhesion. Interacts with DOK2, GRB2, GRB7, GRB14, PIK3R1 and PTPN11/SHP2. Colocalizes with DOK2 at contacts with the extracellular matrix in migrating cells. In terms of processing, proteolytic processing leads to the shedding of the extracellular domain (soluble TIE-2 alias sTIE-2). Post-translationally, autophosphorylated on tyrosine residues in response to ligand binding. Autophosphorylation occurs in trans, i.e. one subunit of the dimeric receptor phosphorylates tyrosine residues on the other subunit. Autophosphorylation occurs in a sequential manner, where Tyr-993 in the kinase activation loop is phosphorylated first, followed by autophosphorylation at Tyr-1109 and at additional tyrosine residues. ANGPT1-induced phosphorylation is impaired during hypoxia, due to increased expression of ANGPT2. Phosphorylation is important for interaction with GRB14, PIK3R1 and PTPN11. Phosphorylation at Tyr-1103 is important for interaction with GRB2 and GRB7. Phosphorylation at Tyr-1109 is important for interaction with DOK2 and for coupling to downstream signal transduction pathways in endothelial cells. Dephosphorylated by PTPRB. Ubiquitinated. The phosphorylated receptor is ubiquitinated and internalized, leading to its degradation. Specifically expressed in developing vascular endothelial cells.

It localises to the cell membrane. The protein localises to the cell junction. The protein resides in the focal adhesion. Its subcellular location is the cytoplasm. It is found in the cytoskeleton. It localises to the secreted. The catalysed reaction is L-tyrosyl-[protein] + ATP = O-phospho-L-tyrosyl-[protein] + ADP + H(+). Its activity is regulated as follows. Angiopoietin binding leads to receptor dimerization and activation by autophosphorylation at Tyr-993 on the kinase activation loop. In terms of biological role, tyrosine-protein kinase that acts as a cell-surface receptor for ANGPT1, ANGPT2 and ANGPT4 and regulates angiogenesis, endothelial cell survival, proliferation, migration, adhesion and cell spreading, reorganization of the actin cytoskeleton, but also maintenance of vascular quiescence. Has anti-inflammatory effects by preventing the leakage of pro-inflammatory plasma proteins and leukocytes from blood vessels. Required for normal angiogenesis and heart development during embryogenesis. Required for post-natal hematopoiesis. After birth, activates or inhibits angiogenesis, depending on the context. Inhibits angiogenesis and promotes vascular stability in quiescent vessels, where endothelial cells have tight contacts. In quiescent vessels, ANGPT1 oligomers recruit TEK to cell-cell contacts, forming complexes with TEK molecules from adjoining cells, and this leads to preferential activation of phosphatidylinositol 3-kinase and the AKT1 signaling cascades. In migrating endothelial cells that lack cell-cell adhesions, ANGT1 recruits TEK to contacts with the extracellular matrix, leading to the formation of focal adhesion complexes, activation of PTK2/FAK and of the downstream kinases MAPK1/ERK2 and MAPK3/ERK1, and ultimately to the stimulation of sprouting angiogenesis. ANGPT1 signaling triggers receptor dimerization and autophosphorylation at specific tyrosine residues that then serve as binding sites for scaffold proteins and effectors. Signaling is modulated by ANGPT2 that has lower affinity for TEK, can promote TEK autophosphorylation in the absence of ANGPT1, but inhibits ANGPT1-mediated signaling by competing for the same binding site. Signaling is also modulated by formation of heterodimers with TIE1, and by proteolytic processing that gives rise to a soluble TEK extracellular domain. The soluble extracellular domain modulates signaling by functioning as decoy receptor for angiopoietins. TEK phosphorylates DOK2, GRB7, GRB14, PIK3R1, SHC1 and TIE1. The sequence is that of Angiopoietin-1 receptor (TEK) from Bos taurus (Bovine).